We begin with the raw amino-acid sequence, 279 residues long: Plasmodesmata-located protein 8 (279 aa).

Residues 1–20 (MRRLFLFSLLFLFFYSSSSS) form the signal peptide. Residues 21 to 253 (RSSSESHIFI…PTNGDHVGKS (233 aa)) lie on the Extracellular side of the membrane. Gnk2-homologous domains are found at residues 27-135 (HIFI…TNDF) and 137-237 (GKPD…GSGY). 6 cysteine pairs are disulfide-bonded: C34-C113, C89-C98, C101-C126, C148-C215, C191-C200, and C203-C228. A helical transmembrane segment spans residues 254-274 (IAIIVGVIAGFAILVVLLSLC). Residues 254–274 (IAIIVGVIAGFAILVVLLSLC) are necessary and sufficient for plasmodesmal targeting. At 275–279 (RNSMH) the chain is on the cytoplasmic side.

It belongs to the cysteine-rich repeat secretory protein family. Plasmodesmata-located proteins (PDLD) subfamily. In terms of assembly, interacts with ACBP6; interaction occurs at the plasma membrane. (Microbial infection) Interacts with Grapevine fanleaf virus (GFLV) 2B-MP. In terms of tissue distribution, highly expressed in pollen, lateral root and elongation zone. Higher expression in the reproductive tissues (flowers and buds) than in vegetative organs (leaves and stems). High expression in shoot and root phloem companion cells (at protein level).

It localises to the cell membrane. The protein resides in the cell junction. Its subcellular location is the plasmodesma. Modulates cell-to-cell trafficking. The protein is Plasmodesmata-located protein 8 of Arabidopsis thaliana (Mouse-ear cress).